Consider the following 1354-residue polypeptide: Phosphoribosylformylglycinamidine synthase (1354 aa).

ATP contacts are provided by residues 327–338, 407–409, and Ala714; these read GATTGTGGRLRD and SGF. Mg(2+) contacts are provided by Asp715, Glu754, Asn758, and Asp918. Residue Ser920 participates in ATP binding. Residues 1087–1337 enclose the Glutamine amidotransferase type-1 domain; sequence VAVLREEGVN…EVSPTQSESP (251 aa). Cys1180 serves as the catalytic Nucleophile. Residues His1310 and Glu1312 contribute to the active site.

The protein in the N-terminal section; belongs to the FGAMS family.

It catalyses the reaction N(2)-formyl-N(1)-(5-phospho-beta-D-ribosyl)glycinamide + L-glutamine + ATP + H2O = 2-formamido-N(1)-(5-O-phospho-beta-D-ribosyl)acetamidine + L-glutamate + ADP + phosphate + H(+). It functions in the pathway purine metabolism; IMP biosynthesis via de novo pathway; 5-amino-1-(5-phospho-D-ribosyl)imidazole from N(2)-formyl-N(1)-(5-phospho-D-ribosyl)glycinamide: step 1/2. In terms of biological role, phosphoribosylformylglycinamidine synthase involved in the purines biosynthetic pathway. Catalyzes the ATP-dependent conversion of formylglycinamide ribonucleotide (FGAR) and glutamine to yield formylglycinamidine ribonucleotide (FGAM) and glutamate. Because of its role in metabolisms, is involved in sleep regulation. This Drosophila melanogaster (Fruit fly) protein is Phosphoribosylformylglycinamidine synthase.